The chain runs to 265 residues: Mlc titration factor A (265 aa).

Residues histidine 111, histidine 148, histidine 152, and glutamate 211 each contribute to the Zn(2+) site.

It belongs to the MtfA family. As to quaternary structure, interacts with Mlc. It depends on Zn(2+) as a cofactor.

The protein localises to the cytoplasm. Involved in the modulation of the activity of the glucose-phosphotransferase system (glucose-PTS). Interacts with the transcriptional repressor Mlc, preventing its interaction with DNA and leading to the modulation of expression of genes regulated by Mlc, including ptsG, which encodes the PTS system glucose-specific EIICB component. In terms of biological role, shows zinc-dependent metallopeptidase activity. In Escherichia coli (strain 55989 / EAEC), this protein is Mlc titration factor A.